The primary structure comprises 481 residues: MSSSSHNDNKIPPEKTTTPPLSSSNEDIYNPADSSNVLSSNQTLVSTNNNNNNNQNNNQNNNQNNDGKDTMDHLSYLSTIDSKRREQSYLKSFYQRFIIEDVVKNFTPAYFVSVMGTGISSSLLYNFPFPAYWLQICGYVMFGLTCTFFIGNIILLIMSCAYYPNRFRDYHVDPSRAVFMGAFSMGYITIVNFIALITKGEHIYFVWTLWWLAVFSAMYTSFLIVYLSFMSKLNESDVEAKLNATLLLPIVAITVVSSSGHSIELDLPHVHQTVLTMIVSFMLWSLSISMAFMVMTLYMGRLIIHKIPPTNLIMTSFLPVGFLGQSSYSIYLFGNNLNKFIPEELLYGKISLCLSGFVSVFLLSFGYFMCFVAVTSVLSKIRPFAKNPNPSHTNRFGLLKLEKSFWSMTFPMGTMSLSNTEIGHGGVGNYPLLTFKVMGSIFAAACIFITVGCSIGVVVYSFKKLREDMTNKNKYRNESMV.

Positions 1–71 (MSSSSHNDNK…NQNNDGKDTM (71 aa)) are disordered. Topologically, residues 1–108 (MSSSSHNDNK…IEDVVKNFTP (108 aa)) are cytoplasmic. Polar residues predominate over residues 15–47 (KTTTPPLSSSNEDIYNPADSSNVLSSNQTLVST). The segment covering 48–65 (NNNNNNNQNNNQNNNQNN) has biased composition (low complexity). A helical transmembrane segment spans residues 109 to 129 (AYFVSVMGTGISSSLLYNFPF). Over 130 to 137 (PAYWLQIC) the chain is Extracellular. Residues 138-158 (GYVMFGLTCTFFIGNIILLIM) traverse the membrane as a helical segment. Topologically, residues 159 to 176 (SCAYYPNRFRDYHVDPSR) are cytoplasmic. Residues 177–197 (AVFMGAFSMGYITIVNFIALI) traverse the membrane as a helical segment. Over 198 to 204 (TKGEHIY) the chain is Extracellular. Residues 205 to 225 (FVWTLWWLAVFSAMYTSFLIV) form a helical membrane-spanning segment. The Cytoplasmic portion of the chain corresponds to 226-244 (YLSFMSKLNESDVEAKLNA). Residues 245–265 (TLLLPIVAITVVSSSGHSIEL) traverse the membrane as a helical segment. At 266–273 (DLPHVHQT) the chain is on the extracellular side. A helical membrane pass occupies residues 274 to 294 (VLTMIVSFMLWSLSISMAFMV). Topologically, residues 295–312 (MTLYMGRLIIHKIPPTNL) are cytoplasmic. Residues 313-333 (IMTSFLPVGFLGQSSYSIYLF) form a helical membrane-spanning segment. Residues 334–353 (GNNLNKFIPEELLYGKISLC) are Extracellular-facing. A helical transmembrane segment spans residues 354-374 (LSGFVSVFLLSFGYFMCFVAV). At 375-438 (TSVLSKIRPF…NYPLLTFKVM (64 aa)) the chain is on the cytoplasmic side. A helical membrane pass occupies residues 439 to 459 (GSIFAAACIFITVGCSIGVVV). Topologically, residues 460–481 (YSFKKLREDMTNKNKYRNESMV) are extracellular.

It belongs to the tellurite-resistance/dicarboxylate transporter (TDT) family.

The protein resides in the cell membrane. Sulfite efflux pump required for the secretion of sulfite as a reducing agent. Plays a role in resistance to neutrophils during infection. Involved in transition to filamentous growth, which is believed to be central to the virulence of this human pathogen. This chain is Sulfite efflux pump SSU1 (SSU1), found in Candida albicans (strain SC5314 / ATCC MYA-2876) (Yeast).